The sequence spans 955 residues: MSDYKSSLNLPSTQFSMKANLANREGKFLKKWQNDRLYDQIRKQNQGKPKFVLHDGPIYANGDIHIGHAVNKVLKDIIVKSKSLSGFDAPYVPGWDCHGLPIELNVEKEYGKVGIKIDVNTFRYKCREYADHQVMRQSQDFQRLGILSDWDNPYLTKDFKYEADVVRALGQVVKNGHVYKGHKPLHWCTECGSALAEAEVEYKNKQSEAIDVKFRIIEDSVFNVKKPVSVVIWTTTPWTLPANEAVALHSELNYVLVDIGSEYLLLSQSLVVNSISRYDIKVTIGERMFSSSELEGLKVQHPFYDKQVPIILGDHVTIDSGTGAVHIAPAHGQEDFIAGLKYNLPIDCPVDAKGVFFKEILLLGGQFIFKANASVIRILKETNTLVKHESLTHSYPHCWRHKTPIIFRITSQWFISMQQNGLRDIVNSEIQKVQWIPHWSKKRIELMVDNRPDWCISRQRFWGVPITLFVHKKTGELHPNTQMLFVCIANRIEQEGIEAWFKSDTKDFIGDDVNDYDKITDILDVWFDSGMSHFVVLKVRKELSNVADLYLEGSDQHRGWFQSSLISSVAINKKAPYKNVLTHGFVVDKDGKKMSKSLGNIISPQKIVNNVGADILRLWIASTDYTGEMTVSDEILKRSADSYRRIRNTMRFMLANMNGFTQKNLVDTKAMLDLDRWIVAKTQKIQEAIIENYDTYQFHYIVKSINNFCSNDLGGFYLDIIKDRQYTTQKDSPARRSAQTALYHITQMMVRWLSPILSFTSEEIWQELAPNKKSIFLQEWYLQVDTIDNVVFDDGIIYGTMISSHISQEQREGLEKSDDIFTSINIVRIISPTIRQAIEKLRKDKVLGASLEAEVDIYCNLKVKEKLSKFGEELRFMFITSDVRLHSFEEKPNNAIEVDSDVLQQVAIVVVKSEHSKCVRCWHHRKDVGSNNKYLELCCRCVENVDGDGEVRKFA.

Positions 58–68 (IYANGDIHIGH) match the 'HIGH' region motif. E552 provides a ligand contact to L-isoleucyl-5'-AMP. The 'KMSKS' region signature appears at 593-597 (KMSKS). Residue K596 participates in ATP binding. The Zn(2+) site is built by C918, C921, C938, and C941.

It belongs to the class-I aminoacyl-tRNA synthetase family. IleS type 1 subfamily. In terms of assembly, monomer. Zn(2+) serves as cofactor.

Its subcellular location is the cytoplasm. It carries out the reaction tRNA(Ile) + L-isoleucine + ATP = L-isoleucyl-tRNA(Ile) + AMP + diphosphate. In terms of biological role, catalyzes the attachment of isoleucine to tRNA(Ile). As IleRS can inadvertently accommodate and process structurally similar amino acids such as valine, to avoid such errors it has two additional distinct tRNA(Ile)-dependent editing activities. One activity is designated as 'pretransfer' editing and involves the hydrolysis of activated Val-AMP. The other activity is designated 'posttransfer' editing and involves deacylation of mischarged Val-tRNA(Ile). The sequence is that of Isoleucine--tRNA ligase from Vesicomyosocius okutanii subsp. Calyptogena okutanii (strain HA).